The sequence spans 264 residues: uncharacterized protein (264 aa).

Residues 7-27 (LTLGICLVLLIILIVGYVIMT) form a helical membrane-spanning segment.

Belongs to the staphylococcal tandem lipoprotein family.

The protein localises to the cell membrane. This is an uncharacterized protein from Staphylococcus aureus (strain N315).